Reading from the N-terminus, the 301-residue chain is Tegument protein VP22 (301 aa).

Residues 1 to 171 are disordered; sequence MTSRRSVKSG…PTRSKTPAQG (171 aa). Residues 113–124 show a composition bias toward low complexity; that stretch reads RTPTTAPRAPRT. The Nuclear localization signal motif lies at 163-166; the sequence is TRSK. Positions 174–267 are interaction with gE; the sequence is RKLHFSTAPP…LVNPDVVQDV (94 aa). Residues 232–244 carry the Nuclear export signal motif; that stretch reads LNELLGITTIRVT. Residues 269–281 are compositionally biased toward low complexity; it reads AATATRGRSAASR. The interval 269–301 is disordered; it reads AATATRGRSAASRPTERPRAPARSASRPRRPVE.

Belongs to the alphaherpesvirinae VP22 tegument protein family. As to quaternary structure, interacts with gE (via C-terminus); this interaction is necessary for the recruitment of VP22 to the Golgi and its packaging into virions. Interacts with gM (via C-terminus). Interacts with VP16; this interaction allows the formation of a tripartite complex composed of VP16, VP22 and UL41/VHS. According to a report interacts with gD (via C-terminus). According another publication, does not interact with gD. Interacts with host CGAS. Interacts with host SET; this interaction may interfere with SET-mediated nucleosomal deposition onto the viral genome. Interacts with the capsid-binding protein UL16. Highly phosphorylated in the host cell. Packaging is selective for underphosphorylated forms.

The protein localises to the virion tegument. It localises to the host cytoplasm. It is found in the host nucleus. The protein resides in the host Golgi apparatus. Its function is as follows. Tegument protein that plays different roles during the time course of infection. Participates in both the accumulation of viral mRNAs and viral protein translation at late time of infection. Modulates the RNase activity of the virion host shutoff protein UL41 probably to ensure necessary levels of key cellular mRNAs and proteins. Plays a role in microtubule reorganization that occurs after viral infection by stabilizing microtubule network. Finally, may prevent nucleosomal deposition onto the viral genome by interacting with and inhibiting host SET. Plays a role in the inhibition of host innate immune system by targeting the CGAS enzymatic activity which is the principal cytosolic DNA sensor that detects invading viral DNA. Acts by mediating disruption of liquid-like droplets in which CGAS is activated, thereby preventing CGAS activity. In Human herpesvirus 1 (strain 17) (HHV-1), this protein is Tegument protein VP22.